The following is a 241-amino-acid chain: Lactate utilization protein C (241 aa).

The protein belongs to the LutC/YkgG family.

Its function is as follows. Is involved in L-lactate degradation and allows cells to grow with lactate as the sole carbon source. The protein is Lactate utilization protein C of Geobacillus sp. (strain WCH70).